Here is a 168-residue protein sequence, read N- to C-terminus: Ubiquitin-conjugating enzyme E2 2 (168 aa).

The UBC core domain maps to 4–150; that stretch reads PAKRRLMRDF…VRETVENSWN (147 aa). The Glycyl thioester intermediate role is filled by C88. Residues 143 to 168 form a disordered region; it reads ETVENSWNEDDEDEDEDEDEDIDDAE. Acidic residues predominate over residues 149-168; the sequence is WNEDDEDEDEDEDEDIDDAE.

The protein belongs to the ubiquitin-conjugating enzyme family.

It localises to the cytoplasm. The protein resides in the nucleus. It catalyses the reaction S-ubiquitinyl-[E1 ubiquitin-activating enzyme]-L-cysteine + [E2 ubiquitin-conjugating enzyme]-L-cysteine = [E1 ubiquitin-activating enzyme]-L-cysteine + S-ubiquitinyl-[E2 ubiquitin-conjugating enzyme]-L-cysteine.. It functions in the pathway protein modification; protein ubiquitination. Functionally, catalyzes the covalent attachment of ubiquitin to other proteins. Plays a role in transcription regulation by catalyzing the monoubiquitination of histone H2B to form H2BK123ub1. H2BK123ub1 gives a specific tag for epigenetic transcriptional activation and is also a prerequisite for H3K4me and H3K79me formation. Also involved in postreplication repair of UV-damaged DNA, in N-end rule-dependent protein degradation and in sporulation. This chain is Ubiquitin-conjugating enzyme E2 2 (UBC2), found in Debaryomyces hansenii (strain ATCC 36239 / CBS 767 / BCRC 21394 / JCM 1990 / NBRC 0083 / IGC 2968) (Yeast).